We begin with the raw amino-acid sequence, 300 residues long: Transcription initiation factor IIB (300 aa).

A TFIIB-type zinc finger spans residues 2-34; the sequence is TKQKVCPVCGSTEFIYDPERGEIVCARCGYVIE. Residues C7, C10, C26, and C29 each coordinate Zn(2+). Repeat copies occupy residues 114 to 197 and 210 to 291.

Belongs to the TFIIB family.

In terms of biological role, stabilizes TBP binding to an archaeal box-A promoter. Also responsible for recruiting RNA polymerase II to the pre-initiation complex (DNA-TBP-TFIIB). In Pyrococcus horikoshii (strain ATCC 700860 / DSM 12428 / JCM 9974 / NBRC 100139 / OT-3), this protein is Transcription initiation factor IIB.